We begin with the raw amino-acid sequence, 786 residues long: LPS-assembly protein LptD (786 aa).

An N-terminal signal peptide occupies residues 1 to 24; sequence MSFTSRSLLASFTGCLLYGTPAIA.

Belongs to the LptD family. In terms of assembly, component of the lipopolysaccharide transport and assembly complex. Interacts with LptE and LptA.

It localises to the cell outer membrane. Its function is as follows. Together with LptE, is involved in the assembly of lipopolysaccharide (LPS) at the surface of the outer membrane. This Aliivibrio fischeri (strain ATCC 700601 / ES114) (Vibrio fischeri) protein is LPS-assembly protein LptD.